Consider the following 188-residue polypeptide: MVKRGLFVGRFQPVHNGHIKALEFVFSQVDEVIIGIGSAQASHTLKNPFTTSERMEMLIRALEEAELTEKRYYLIPLPDINFNAIWATYVVSMVPRFDVVFTGNSLVAQLFREKGYEVIVQPMFRKDILSATEIRRRMVEGEPWEELVPRSVAEFIREIKGVERIKMLATNLESSEKELQAPIRIPEF.

This sequence belongs to the archaeal NMN adenylyltransferase family.

The protein localises to the cytoplasm. It carries out the reaction beta-nicotinamide D-ribonucleotide + ATP + H(+) = diphosphate + NAD(+). Its pathway is cofactor biosynthesis; NAD(+) biosynthesis; NAD(+) from nicotinamide D-ribonucleotide: step 1/1. The chain is Nicotinamide-nucleotide adenylyltransferase from Thermococcus kodakarensis (strain ATCC BAA-918 / JCM 12380 / KOD1) (Pyrococcus kodakaraensis (strain KOD1)).